A 226-amino-acid polypeptide reads, in one-letter code: Sugar fermentation stimulation protein homolog (226 aa).

It belongs to the SfsA family.

The sequence is that of Sugar fermentation stimulation protein homolog from Ruminiclostridium cellulolyticum (strain ATCC 35319 / DSM 5812 / JCM 6584 / H10) (Clostridium cellulolyticum).